Consider the following 93-residue polypeptide: Small ribosomal subunit protein uS19 (93 aa).

It belongs to the universal ribosomal protein uS19 family.

In terms of biological role, protein S19 forms a complex with S13 that binds strongly to the 16S ribosomal RNA. The protein is Small ribosomal subunit protein uS19 of Phytoplasma australiense.